The chain runs to 85 residues: UPF0291 protein SAK_0343 (85 aa).

The tract at residues 58–85 is disordered; it reads GNDVTPEKLRQVQREKGLHGRSLDDPNS. The span at 62 to 85 shows a compositional bias: basic and acidic residues; sequence TPEKLRQVQREKGLHGRSLDDPNS.

This sequence belongs to the UPF0291 family.

It is found in the cytoplasm. The polypeptide is UPF0291 protein SAK_0343 (Streptococcus agalactiae serotype Ia (strain ATCC 27591 / A909 / CDC SS700)).